The following is a 550-amino-acid chain: Putative pentatricopeptide repeat-containing protein At5g37570 (550 aa).

PPR repeat units follow at residues 73–107 (GTYLWNHLIKGYSNKFLFFETVSILMRMMRTGLAR), 109–143 (DEYTFPLVMKVCSNNGQVRVGSSVHGLVLRIGFDK), 144–174 (DVVVGTSFVDFYGKCKDLFSARKVFGEMPER), 175–205 (NAVSWTALVVAYVKSGELEEAKSMFDLMPER), 206–240 (NLGSWNALVDGLVKSGDLVNAKKLFDEMPKRDIIS), 241–267 (YTSMIDGYAKGGDMVSARDLFEEARGV), 268–302 (DVRAWSALILGYAQNGQPNEAFKVFSEMCAKNVKP), 303–333 (DEFIMVGLMSACSQMGCFELCEKVDSYLHQR), 339–369 (SHYVVPALIDMNAKCGHMDRAAKLFEEMPQR), 370–404 (DLVSYCSMMEGMAIHGCGSEAIRLFEKMVDEGIVP), 405–435 (DEVAFTVILKVCGQSRLVEEGLRYFELMRKK), and 441–475 (SPDHYSCIVNLLSRTGKLKEAYELIKSMPFEAHAS). The tract at residues 476–550 (AWGSLLGGCS…KICGRSWISR (75 aa)) is type E motif.

The protein belongs to the PPR family. PCMP-E subfamily.

This is Putative pentatricopeptide repeat-containing protein At5g37570 (PCMP-E37) from Arabidopsis thaliana (Mouse-ear cress).